A 211-amino-acid chain; its full sequence is Protein-L-isoaspartate O-methyltransferase (211 aa).

Residue Ser62 is part of the active site.

Belongs to the methyltransferase superfamily. L-isoaspartyl/D-aspartyl protein methyltransferase family.

It is found in the cytoplasm. It carries out the reaction [protein]-L-isoaspartate + S-adenosyl-L-methionine = [protein]-L-isoaspartate alpha-methyl ester + S-adenosyl-L-homocysteine. Functionally, catalyzes the methyl esterification of L-isoaspartyl residues in peptides and proteins that result from spontaneous decomposition of normal L-aspartyl and L-asparaginyl residues. It plays a role in the repair and/or degradation of damaged proteins. The chain is Protein-L-isoaspartate O-methyltransferase from Shewanella baltica (strain OS223).